Reading from the N-terminus, the 362-residue chain is Alternative oxidase, mitochondrial (362 aa).

The N-terminal 64 residues, 1–64 (MNTPKVNILY…RGFTTTSVVR (64 aa)), are a transit peptide targeting the mitochondrion. A helical transmembrane segment spans residues 156-176 (LVRFIFLESIAGVPGMVAGML). Fe cation is bound by residues glutamate 163, glutamate 202, and histidine 205. The helical transmembrane segment at 222–242 (LILGAQGVFFNAMFLSYLVSP) threads the bilayer. Glutamate 253, glutamate 310, and histidine 313 together coordinate Fe cation.

It belongs to the alternative oxidase family. Requires Fe cation as cofactor.

The protein resides in the mitochondrion inner membrane. Its function is as follows. Catalyzes cyanide-resistant oxygen consumption. May increase respiration when the cytochrome respiratory pathway is restricted, or in response to low temperatures. This Gelasinospora sp. (strain S23) protein is Alternative oxidase, mitochondrial (aod-1).